Here is a 71-residue protein sequence, read N- to C-terminus: Calcium dodecin (71 aa).

E18 serves as a coordination point for Ca(2+).

It belongs to the dodecin family. As to quaternary structure, homododecamer; 12 subunits assemble to form a hollow sphere with a diameter of about 75 Angstroms. Calcium ions are bound at the interface between three subunits.

Binds calcium ions. May play a role in sequestering additional small ligands. In Mycobacterium tuberculosis (strain ATCC 25618 / H37Rv), this protein is Calcium dodecin (secE2).